The sequence spans 240 residues: Splicing factor rtf2 (240 aa).

2 disordered regions span residues 1 to 22 (MGND…GKVP) and 181 to 240 (SLNK…RVKI). Over residues 185 to 210 (ASKKSNKNGDKKRKHVSKSNSKHAKH) the composition is skewed to basic residues. Basic and acidic residues-rich tracts occupy residues 211 to 224 (ELRT…ENVK) and 231 to 240 (DMERVKRVKI).

Belongs to the rtf2 family. As to quaternary structure, interacts with pcn1.

The protein resides in the nucleus. In terms of biological role, putative splicing factor that is required for the correct splicing of a subset of pre-mRNAs. Required for the correct splicing of rtf1, a replication termination factor that mediates site-specific replication termination at replication barrier RTS1. The sequence is that of Splicing factor rtf2 from Schizosaccharomyces pombe (strain 972 / ATCC 24843) (Fission yeast).